A 532-amino-acid chain; its full sequence is Probable cytochrome P450 524A1 (532 aa).

The helical transmembrane segment at 8–28 threads the bilayer; it reads FIIFILLAALAVFVSEATSKV. C478 provides a ligand contact to heme.

It belongs to the cytochrome P450 family. Heme is required as a cofactor.

The protein localises to the membrane. In Dictyostelium discoideum (Social amoeba), this protein is Probable cytochrome P450 524A1 (cyp524A1).